The chain runs to 119 residues: Putative F420H(2)-dependent quinone reductase Rv3178 (119 aa).

Coenzyme F420-(gamma-Glu)n is bound by residues 21–23 (RKS), 27–32 (FVAPLL), 43–46 (VASA), and 54–58 (QWYRN).

The protein belongs to the F420H(2)-dependent quinone reductase family.

It is found in the cell membrane. The enzyme catalyses oxidized coenzyme F420-(gamma-L-Glu)(n) + a quinol + H(+) = reduced coenzyme F420-(gamma-L-Glu)(n) + a quinone. Involved in a F420-dependent anti-oxidant mechanism that protects M.tuberculosis against oxidative stress and bactericidal agents. Catalyzes the F420H(2)-dependent two-electron reduction of quinones to dihydroquinones, thereby preventing the formation of cytotoxic semiquinones obtained by the one-electron reduction pathway. Since menaquinone is the sole quinone electron carrier in the respiratory chain in M.tuberculosis, the physiological electron acceptor for Fqr-mediated F420H(2) oxidation is therefore likely to be the endogenous menaquinone found in the membrane fraction of M.tuberculosis. The protein is Putative F420H(2)-dependent quinone reductase Rv3178 of Mycobacterium tuberculosis (strain ATCC 25618 / H37Rv).